We begin with the raw amino-acid sequence, 166 residues long: Large ribosomal subunit protein uL10 (166 aa).

The protein belongs to the universal ribosomal protein uL10 family. In terms of assembly, part of the ribosomal stalk of the 50S ribosomal subunit. The N-terminus interacts with L11 and the large rRNA to form the base of the stalk. The C-terminus forms an elongated spine to which L12 dimers bind in a sequential fashion forming a multimeric L10(L12)X complex.

Functionally, forms part of the ribosomal stalk, playing a central role in the interaction of the ribosome with GTP-bound translation factors. The sequence is that of Large ribosomal subunit protein uL10 from Ectopseudomonas mendocina (strain ymp) (Pseudomonas mendocina).